A 210-amino-acid chain; its full sequence is Phosphoheptose isomerase (210 aa).

Residues 38–202 (IAACLARGGK…ENVAALAPYL (165 aa)) enclose the SIS domain. 53 to 55 (NGG) contacts substrate. Zn(2+) contacts are provided by histidine 62 and glutamate 66. Substrate contacts are provided by residues glutamate 66, 95-96 (ND), 121-123 (STS), serine 126, and glutamine 173. Zn(2+) is bound by residues glutamine 173 and histidine 181.

The protein belongs to the SIS family. GmhA subfamily. As to quaternary structure, homotetramer. The cofactor is Zn(2+).

Its subcellular location is the cytoplasm. It carries out the reaction 2 D-sedoheptulose 7-phosphate = D-glycero-alpha-D-manno-heptose 7-phosphate + D-glycero-beta-D-manno-heptose 7-phosphate. The protein operates within carbohydrate biosynthesis; D-glycero-D-manno-heptose 7-phosphate biosynthesis; D-glycero-alpha-D-manno-heptose 7-phosphate and D-glycero-beta-D-manno-heptose 7-phosphate from sedoheptulose 7-phosphate: step 1/1. Its function is as follows. Catalyzes the isomerization of sedoheptulose 7-phosphate in D-glycero-D-manno-heptose 7-phosphate. The sequence is that of Phosphoheptose isomerase from Desulfovibrio desulfuricans (strain ATCC 27774 / DSM 6949 / MB).